The chain runs to 506 residues: Probable UTP--glucose-1-phosphate uridylyltransferase (506 aa).

Phosphoserine occurs at positions 15 and 17. Residues 115–118, K129, Q192, and G221 contribute to the UTP site; that span reads LNGG. 117-118 contacts substrate; it reads GG. K129 lines the Mg(2+) pocket. Substrate-binding positions include H222 and 250 to 252; that span reads NID. UTP-binding residues include D252 and K394. Residue D252 participates in Mg(2+) binding. K394 is an active-site residue. The segment at 455–506 is oligomerization; it reads HLTITGDVNIGRNVTLKGTVIIVASDANRIDIPNGSVLENCVITGNLNILEH.

The protein belongs to the UDPGP type 1 family. As to quaternary structure, homooctamer.

The protein resides in the cytoplasm. The protein localises to the nucleus. The catalysed reaction is alpha-D-glucose 1-phosphate + UTP + H(+) = UDP-alpha-D-glucose + diphosphate. Its function is as follows. Plays a central role as a glucosyl donor in cellular metabolic pathways. The sequence is that of Probable UTP--glucose-1-phosphate uridylyltransferase (fyu1) from Schizosaccharomyces pombe (strain 972 / ATCC 24843) (Fission yeast).